The sequence spans 366 residues: Chaperone protein DnaJ (366 aa).

A J domain is found at 5 to 69; it reads DYYEVLGVSK…QKRAQYDQFG (65 aa). The segment at 128–210 adopts a CR-type zinc-finger fold; it reads GKELNVEIPV…CHGTGKVRKR (83 aa). Residues C141, C144, C158, C161, C184, C187, C198, and C201 each contribute to the Zn(2+) site. CXXCXGXG motif repeat units lie at residues 141-148, 158-165, 184-191, and 198-205; these read CDTCHGSG, CKYCSGTG, CRHCSGTG, and CTTCHGTG.

Belongs to the DnaJ family. Homodimer. Requires Zn(2+) as cofactor.

Its subcellular location is the cytoplasm. Its function is as follows. Participates actively in the response to hyperosmotic and heat shock by preventing the aggregation of stress-denatured proteins and by disaggregating proteins, also in an autonomous, DnaK-independent fashion. Unfolded proteins bind initially to DnaJ; upon interaction with the DnaJ-bound protein, DnaK hydrolyzes its bound ATP, resulting in the formation of a stable complex. GrpE releases ADP from DnaK; ATP binding to DnaK triggers the release of the substrate protein, thus completing the reaction cycle. Several rounds of ATP-dependent interactions between DnaJ, DnaK and GrpE are required for fully efficient folding. Also involved, together with DnaK and GrpE, in the DNA replication of plasmids through activation of initiation proteins. The protein is Chaperone protein DnaJ of Bacillus cytotoxicus (strain DSM 22905 / CIP 110041 / 391-98 / NVH 391-98).